The sequence spans 23 residues: Magainin-R2 (23 aa).

In terms of tissue distribution, expressed by the skin glands.

The protein resides in the secreted. In terms of biological role, antimicrobial peptide. In Xenopus ruwenzoriensis (Uganda clawed frog), this protein is Magainin-R2.